Here is a 924-residue protein sequence, read N- to C-terminus: Probable dipeptidyl-aminopeptidase B (924 aa).

Positions 1-104 (MPPFTYSDDT…DQRSPGDGQR (104 aa)) are disordered. Residues 1 to 111 (MPPFTYSDDT…GQRMDRSLRR (111 aa)) are Cytoplasmic-facing. A compositionally biased stretch (basic and acidic residues) spans 9–23 (DTLRSGRDRFRDHSP). Residues 31 to 43 (SQETDSSASTTSI) are compositionally biased toward polar residues. Composition is skewed to basic and acidic residues over residues 47–58 (RIQERLDTKEFT) and 92–104 (SRSD…DGQR). A helical; Signal-anchor for type II membrane protein membrane pass occupies residues 112-132 (WLFIVSGVLVATWVIGLFVFV). The Vacuolar segment spans residues 133-924 (SSKAYKPSSS…GMKKRAAPTA (792 aa)). Asn231 and Asn364 each carry an N-linked (GlcNAc...) asparagine glycan. Catalysis depends on Ser768, which acts as the Charge relay system. Asn827 carries N-linked (GlcNAc...) asparagine glycosylation. Residues Asp845 and His878 each act as charge relay system in the active site.

Belongs to the peptidase S9B family.

Its subcellular location is the vacuole membrane. The catalysed reaction is Release of an N-terminal dipeptide, Xaa-Yaa-|-Zaa-, from a polypeptide, preferentially when Yaa is Pro, provided Zaa is neither Pro nor hydroxyproline.. Functionally, type IV dipeptidyl-peptidase which removes N-terminal dipeptides sequentially from polypeptides having unsubstituted N-termini provided that the penultimate residue is proline. This Sordaria macrospora (strain ATCC MYA-333 / DSM 997 / K(L3346) / K-hell) protein is Probable dipeptidyl-aminopeptidase B (DAPB).